Here is a 518-residue protein sequence, read N- to C-terminus: Zinc finger protein 776 (518 aa).

The 76-residue stretch at 14–89 (VTFEDVAVNF…HWTGVCTKKV (76 aa)) folds into the KRAB domain. Glycyl lysine isopeptide (Lys-Gly) (interchain with G-Cter in SUMO2) cross-links involve residues Lys171, Lys196, Lys220, and Lys247. Residues 208 to 230 (YICGESTIPFSNKHSLVLHQRLL) form a C2H2-type 1; degenerate zinc finger. A C2H2-type 2; degenerate zinc finger spans residues 236–258 (YVCSDSGKFTSKSNSFNNHQGVR). 7 C2H2-type zinc fingers span residues 264 to 286 (YQCGQCDESFWYKAHLTEHQRVH), 292 to 314 (YECGECDKSFSHKHSLVDHQRVH), 320 to 342 (YECDECGKSFSHKRSLVHHQRVH), 348 to 370 (YQCGECGKSFNHKCNLIQHQRVH), 376 to 398 (FECTACGKLFRSNSHLKEHQRVH), 404 to 426 (YECKECRKSFRYKSHLTEHQRVH), and 432 to 454 (YECRECGKCFHQKGSLIQHQQIH). The C2H2-type 10; degenerate zinc-finger motif lies at 460-482 (HECGECGKCFHQKGSLIRHQQIH). A C2H2-type 11 zinc finger spans residues 488 to 510 (HECGECGKCFRQKGNLIKHQRVH).

The protein belongs to the krueppel C2H2-type zinc-finger protein family.

The protein resides in the nucleus. In terms of biological role, may be involved in transcriptional regulation. The protein is Zinc finger protein 776 (ZNF776) of Homo sapiens (Human).